We begin with the raw amino-acid sequence, 236 residues long: 4-hydroxy-tetrahydrodipicolinate reductase (236 aa).

NAD(+)-binding positions include 11–16 (GASGRM), 92–94 (GTT), and 116–119 (GSNF). Residue His-148 is the Proton donor/acceptor of the active site. (S)-2,3,4,5-tetrahydrodipicolinate is bound at residue His-149. Lys-152 serves as the catalytic Proton donor. 158–159 (GS) contributes to the (S)-2,3,4,5-tetrahydrodipicolinate binding site.

Belongs to the DapB family.

Its subcellular location is the cytoplasm. It catalyses the reaction (S)-2,3,4,5-tetrahydrodipicolinate + NAD(+) + H2O = (2S,4S)-4-hydroxy-2,3,4,5-tetrahydrodipicolinate + NADH + H(+). The catalysed reaction is (S)-2,3,4,5-tetrahydrodipicolinate + NADP(+) + H2O = (2S,4S)-4-hydroxy-2,3,4,5-tetrahydrodipicolinate + NADPH + H(+). The protein operates within amino-acid biosynthesis; L-lysine biosynthesis via DAP pathway; (S)-tetrahydrodipicolinate from L-aspartate: step 4/4. Functionally, catalyzes the conversion of 4-hydroxy-tetrahydrodipicolinate (HTPA) to tetrahydrodipicolinate. The protein is 4-hydroxy-tetrahydrodipicolinate reductase of Xylella fastidiosa (strain M23).